The following is a 112-amino-acid chain: Cell cycle protein GpsB (112 aa).

Residues Ile-38–Val-72 are a coiled coil.

The protein belongs to the GpsB family. As to quaternary structure, forms polymers through the coiled coil domains. Interacts with PBP1, MreC and EzrA.

It localises to the cytoplasm. In terms of biological role, divisome component that associates with the complex late in its assembly, after the Z-ring is formed, and is dependent on DivIC and PBP2B for its recruitment to the divisome. Together with EzrA, is a key component of the system that regulates PBP1 localization during cell cycle progression. Its main role could be the removal of PBP1 from the cell pole after pole maturation is completed. Also contributes to the recruitment of PBP1 to the division complex. Not essential for septum formation. The polypeptide is Cell cycle protein GpsB (Bacillus cereus (strain ZK / E33L)).